The chain runs to 367 residues: tRNA/tmRNA (uracil-C(5))-methyltransferase (367 aa).

The S-adenosyl-L-methionine site is built by Q190, Y218, N223, E239, and D299. C324 acts as the Nucleophile in catalysis. Catalysis depends on E358, which acts as the Proton acceptor.

This sequence belongs to the class I-like SAM-binding methyltransferase superfamily. RNA M5U methyltransferase family. TrmA subfamily.

It catalyses the reaction uridine(54) in tRNA + S-adenosyl-L-methionine = 5-methyluridine(54) in tRNA + S-adenosyl-L-homocysteine + H(+). The enzyme catalyses uridine(341) in tmRNA + S-adenosyl-L-methionine = 5-methyluridine(341) in tmRNA + S-adenosyl-L-homocysteine + H(+). Functionally, dual-specificity methyltransferase that catalyzes the formation of 5-methyluridine at position 54 (m5U54) in all tRNAs, and that of position 341 (m5U341) in tmRNA (transfer-mRNA). The polypeptide is tRNA/tmRNA (uracil-C(5))-methyltransferase (Serratia proteamaculans (strain 568)).